The following is a 252-amino-acid chain: Imidazole glycerol phosphate synthase subunit HisF (252 aa).

Catalysis depends on residues Asp11 and Asp130.

The protein belongs to the HisA/HisF family. As to quaternary structure, heterodimer of HisH and HisF.

It localises to the cytoplasm. The enzyme catalyses 5-[(5-phospho-1-deoxy-D-ribulos-1-ylimino)methylamino]-1-(5-phospho-beta-D-ribosyl)imidazole-4-carboxamide + L-glutamine = D-erythro-1-(imidazol-4-yl)glycerol 3-phosphate + 5-amino-1-(5-phospho-beta-D-ribosyl)imidazole-4-carboxamide + L-glutamate + H(+). Its pathway is amino-acid biosynthesis; L-histidine biosynthesis; L-histidine from 5-phospho-alpha-D-ribose 1-diphosphate: step 5/9. Its function is as follows. IGPS catalyzes the conversion of PRFAR and glutamine to IGP, AICAR and glutamate. The HisF subunit catalyzes the cyclization activity that produces IGP and AICAR from PRFAR using the ammonia provided by the HisH subunit. The protein is Imidazole glycerol phosphate synthase subunit HisF of Geobacillus thermodenitrificans (strain NG80-2).